The following is a 70-amino-acid chain: Putative membrane protein insertion efficiency factor (70 aa).

Belongs to the UPF0161 family.

Its subcellular location is the cell membrane. Functionally, could be involved in insertion of integral membrane proteins into the membrane. The sequence is that of Putative membrane protein insertion efficiency factor from Rubrobacter xylanophilus (strain DSM 9941 / JCM 11954 / NBRC 16129 / PRD-1).